Here is a 267-residue protein sequence, read N- to C-terminus: Phosphoethanolamine/phosphocholine phosphatase (267 aa).

D32 serves as the catalytic Nucleophile. Residues D32 and D34 each contribute to the Mg(2+) site. D34 (proton donor) is an active-site residue. Positions 43 and 123 each coordinate substrate. D203 contributes to the Mg(2+) binding site.

Belongs to the HAD-like hydrolase superfamily. PHOSPHO family. Mg(2+) serves as cofactor. As to expression, expressed at sites of mineralization in bone and cartilage. Highly expressed in osteoblast cell line SaOS-2 which produces a mineralized matrix, but not in MG-63 cell line, which do not mineralize.

It is found in the extracellular vesicle. The enzyme catalyses phosphoethanolamine + H2O = ethanolamine + phosphate. The catalysed reaction is phosphocholine + H2O = choline + phosphate. In terms of biological role, phosphatase that has a high activity toward phosphoethanolamine (PEA) and phosphocholine (PCho). Involved in the generation of inorganic phosphate for bone mineralization. Acts in a non-redundant manner with PHOSPHO1 in skeletal mineralization: while PHOSPHO1 mediates the initiation of hydroxyapatite crystallization in the matrix vesicles (MVs), ALPL/TNAP catalyzes the spread of hydroxyapatite crystallization in the extracellular matrix. In Homo sapiens (Human), this protein is Phosphoethanolamine/phosphocholine phosphatase.